The primary structure comprises 396 residues: Phosphoglycerate kinase (396 aa).

Substrate contacts are provided by residues 21–23, arginine 36, 59–62, arginine 119, and arginine 156; these read DFN and HLGR. ATP-binding positions include lysine 207, glutamate 325, and 352–355; that span reads GGDS.

Belongs to the phosphoglycerate kinase family. As to quaternary structure, monomer.

Its subcellular location is the cytoplasm. It carries out the reaction (2R)-3-phosphoglycerate + ATP = (2R)-3-phospho-glyceroyl phosphate + ADP. Its pathway is carbohydrate degradation; glycolysis; pyruvate from D-glyceraldehyde 3-phosphate: step 2/5. This Lacticaseibacillus casei (strain BL23) (Lactobacillus casei) protein is Phosphoglycerate kinase.